The chain runs to 145 residues: Large-conductance mechanosensitive channel (145 aa).

2 helical membrane passes run 30-50 (VAVV…AWLM) and 74-94 (GELV…FLII).

It belongs to the MscL family. In terms of assembly, homopentamer.

It localises to the cell inner membrane. In terms of biological role, channel that opens in response to stretch forces in the membrane lipid bilayer. May participate in the regulation of osmotic pressure changes within the cell. The sequence is that of Large-conductance mechanosensitive channel from Synechocystis sp. (strain ATCC 27184 / PCC 6803 / Kazusa).